The sequence spans 1526 residues: DNA topoisomerase 2-alpha (1526 aa).

Residue Met1 is modified to N-acetylmethionine. The interval 1 to 21 (MELSPLQPVNENMQMNKKKNE) is disordered. Ser4 bears the Phosphoserine mark. Lys17 is covalently cross-linked (Glycyl lysine isopeptide (Lys-Gly) (interchain with G-Cter in SUMO2)). ATP is bound by residues Asn90, Asn119, and 147-149 (SSN). Glycyl lysine isopeptide (Lys-Gly) (interchain with G-Cter in SUMO2) cross-links involve residues Lys155 and Lys156. An ATP-binding site is contributed by 160-167 (GRNGYGAK). Residue Lys260 forms a Glycyl lysine isopeptide (Lys-Gly) (interchain with G-Cter in SUMO2) linkage. Thr281 is subject to Phosphothreonine. The interval 341-343 (KKK) is interaction with DNA. Lys351 participates in a covalent cross-link: Glycyl lysine isopeptide (Lys-Gly) (interchain with G-Cter in SUMO2). An ATP-binding site is contributed by 375–377 (QTK). Residues Lys385, Lys396, Lys415, Lys417, Lys424, and Lys439 each participate in a glycyl lysine isopeptide (Lys-Gly) (interchain with G-Cter in SUMO2) cross-link. The 118-residue stretch at 454 to 571 (CTLILTEGDS…SLLRHRFLEE (118 aa)) folds into the Toprim domain. Residue Glu460 participates in Mg(2+) binding. Residues Lys465, Lys479, and Lys528 each participate in a glycyl lysine isopeptide (Lys-Gly) (interchain with G-Cter in SUMO2) cross-link. Mg(2+)-binding residues include Asp540 and Asp542. Glycyl lysine isopeptide (Lys-Gly) (interchain with G-Cter in SUMO2) cross-links involve residues Lys583, Lys598, Lys613, Lys621, Lys624, Lys631, Lys638, Lys654, Lys661, and Lys675. The region spanning 714-1166 (IPSMVDGLKP…SPSDLWKEDL (453 aa)) is the Topo IIA-type catalytic domain. Tyr804 (O-(5'-phospho-DNA)-tyrosine intermediate) is an active-site residue. The segment at 989-998 (KLQTSLTCNS) is interaction with DNA. A Glycyl lysine isopeptide (Lys-Gly) (interchain with G-Cter in SUMO2) cross-link involves residue Lys1074. Disordered regions lie at residues 1089–1117 (WKEAQQKVPDEEENEESDNENSDSVAESG) and 1180–1217 (EKQDEQVGLPGKGGKAKGKKAQMSEVLPSPHGKRVIPQ). The span at 1098–1109 (DEEENEESDNEN) shows a compositional bias: acidic residues. Residue Ser1105 is modified to Phosphoserine; by CK1. Residues Lys1191 and Lys1199 each participate in a glycyl lysine isopeptide (Lys-Gly) (interchain with G-Cter in SUMO2) cross-link. At Ser1208 the chain carries Phosphoserine. Lys1223 is covalently cross-linked (Glycyl lysine isopeptide (Lys-Gly) (interchain with G-Cter in SUMO2)). A disordered region spans residues 1233 to 1526 (KIKSENVEGT…LEESDDDDLF (294 aa)). Lys1235 is covalently cross-linked (Glycyl lysine isopeptide (Lys-Gly) (interchain with G-Cter in SUMO1); alternate). Lys1235 participates in a covalent cross-link: Glycyl lysine isopeptide (Lys-Gly) (interchain with G-Cter in SUMO2); alternate. Thr1242 carries the phosphothreonine modification. Lys1254 is covalently cross-linked (Glycyl lysine isopeptide (Lys-Gly) (interchain with G-Cter in SUMO2)). Positions 1255 to 1265 (QRIEKKQKKEP) are enriched in basic and acidic residues. Glycyl lysine isopeptide (Lys-Gly) (interchain with G-Cter in SUMO2) cross-links involve residues Lys1271, Lys1278, and Lys1281. Phosphoserine is present on residues Ser1290, Ser1292, Ser1294, and Ser1297. Residue Thr1322 is modified to Phosphothreonine. Residues 1325–1344 (LDSDEDFSGSDGKDEDEDFF) show a composition bias toward acidic residues. Phosphoserine occurs at positions 1327 and 1332. The residue at position 1349 (Thr1349) is a Phosphothreonine. Glycyl lysine isopeptide (Lys-Gly) (interchain with G-Cter in SUMO2) cross-links involve residues Lys1358, Lys1362, and Lys1368. Ser1369 and Ser1372 each carry phosphoserine. Residue Lys1380 forms a Glycyl lysine isopeptide (Lys-Gly) (interchain with G-Cter in SUMO2) linkage. A phosphoserine mark is found at Ser1382 and Ser1386. Over residues 1405–1426 (SKQTVAVKKTATKSQSSTSTAG) the composition is skewed to low complexity. A Glycyl lysine isopeptide (Lys-Gly) (interchain with G-Cter in SUMO2); alternate cross-link involves residue Lys1417. N6-acetyllysine; alternate is present on Lys1417. The interval 1428 to 1434 (KKRAVPK) is interaction with PLSCR1. Lys1437 participates in a covalent cross-link: Glycyl lysine isopeptide (Lys-Gly) (interchain with G-Cter in SUMO2); alternate. Lys1437 is modified (N6-acetyllysine; alternate). Residues Lys1449 and Lys1454 each participate in a glycyl lysine isopeptide (Lys-Gly) (interchain with G-Cter in SUMO2) cross-link. Residues Ser1464, Ser1466, Ser1469, and Ser1471 each carry the phosphoserine modification. Glycyl lysine isopeptide (Lys-Gly) (interchain with G-Cter in SUMO2) cross-links involve residues Lys1479 and Lys1487. The span at 1486 to 1497 (SKGENQDFRVDL) shows a compositional bias: basic and acidic residues. Ser1520 carries the phosphoserine modification.

The protein belongs to the type II topoisomerase family. As to quaternary structure, homodimer. Interacts with COPS5. Interacts with RECQL5; this stimulates DNA decatenation. Interacts with SETMAR; stimulates the topoisomerase activity. Interacts with DHX9; this interaction occurs in a E2 enzyme UBE2I- and RNA-dependent manner, negatively regulates DHX9-mediated double-stranded DNA and RNA duplex helicase activity and stimulates TOP2A-mediated supercoiled DNA relaxation activity. Interacts with HNRNPU (via C-terminus); this interaction protects the topoisomerase TOP2A from degradation and positively regulates the relaxation of supercoiled DNA in a RNA-dependent manner. Interacts with MCM3AP. Interacts with ERCC6. Interacts with PLSCR1. Interacts with GCNA; this interaction allows the resolution of topoisomerase II (TOP2A) DNA-protein cross-links. Interacts with POL1RA/RPA1 (via dock II) and UBTF in the context of Pol I complex; may assist Pol I transcription initiation by releasing supercoils occurring during DNA unwinding. Interacts with TPRN; TPRN interacts with a number of DNA damage response proteins, is recruited to sites of DNA damage and may play a role in DNA damage repair. Mg(2+) is required as a cofactor. It depends on Mn(2+) as a cofactor. Ca(2+) serves as cofactor. Phosphorylation has no effect on catalytic activity. However, phosphorylation at Ser-1105 by CSNK1D/CK1 promotes DNA cleavable complex formation.

It is found in the cytoplasm. It localises to the nucleus. The protein resides in the nucleoplasm. Its subcellular location is the nucleolus. The catalysed reaction is ATP-dependent breakage, passage and rejoining of double-stranded DNA.. In terms of biological role, key decatenating enzyme that alters DNA topology by binding to two double-stranded DNA molecules, generating a double-stranded break in one of the strands, passing the intact strand through the broken strand, and religating the broken strand. May play a role in regulating the period length of BMAL1 transcriptional oscillation. The polypeptide is DNA topoisomerase 2-alpha (TOP2A) (Cricetulus griseus (Chinese hamster)).